Here is a 259-residue protein sequence, read N- to C-terminus: Thiazole synthase (259 aa).

K99 functions as the Schiff-base intermediate with DXP in the catalytic mechanism. Residues G160, 187–188 (AG), and 209–210 (NT) contribute to the 1-deoxy-D-xylulose 5-phosphate site.

This sequence belongs to the ThiG family. As to quaternary structure, homotetramer. Forms heterodimers with either ThiH or ThiS.

The protein localises to the cytoplasm. The enzyme catalyses [ThiS sulfur-carrier protein]-C-terminal-Gly-aminoethanethioate + 2-iminoacetate + 1-deoxy-D-xylulose 5-phosphate = [ThiS sulfur-carrier protein]-C-terminal Gly-Gly + 2-[(2R,5Z)-2-carboxy-4-methylthiazol-5(2H)-ylidene]ethyl phosphate + 2 H2O + H(+). The protein operates within cofactor biosynthesis; thiamine diphosphate biosynthesis. Its function is as follows. Catalyzes the rearrangement of 1-deoxy-D-xylulose 5-phosphate (DXP) to produce the thiazole phosphate moiety of thiamine. Sulfur is provided by the thiocarboxylate moiety of the carrier protein ThiS. In vitro, sulfur can be provided by H(2)S. The sequence is that of Thiazole synthase from Solibacter usitatus (strain Ellin6076).